We begin with the raw amino-acid sequence, 147 residues long: 3-dehydroquinate dehydratase (147 aa).

The Proton acceptor role is filled by Tyr24. Residues Asn75, His81, and Asp88 each contribute to the substrate site. His101 (proton donor) is an active-site residue. Substrate-binding positions include 102 to 103 (IS) and Arg112.

This sequence belongs to the type-II 3-dehydroquinase family. As to quaternary structure, homododecamer.

The enzyme catalyses 3-dehydroquinate = 3-dehydroshikimate + H2O. It participates in metabolic intermediate biosynthesis; chorismate biosynthesis; chorismate from D-erythrose 4-phosphate and phosphoenolpyruvate: step 3/7. Functionally, catalyzes a trans-dehydration via an enolate intermediate. This chain is 3-dehydroquinate dehydratase, found in Cereibacter sphaeroides (strain ATCC 17023 / DSM 158 / JCM 6121 / CCUG 31486 / LMG 2827 / NBRC 12203 / NCIMB 8253 / ATH 2.4.1.) (Rhodobacter sphaeroides).